A 1144-amino-acid chain; its full sequence is Alpha-mannosidase 2 (1144 aa).

The Cytoplasmic portion of the chain corresponds to 1 to 5 (MKLSR). The helical; Signal-anchor for type II membrane protein transmembrane segment at 6–26 (QFTVFGSAIFCVVIFSLYLML) threads the bilayer. Over 27–1144 (DRGHLDYPRN…EISTFRIQLR (1118 aa)) the chain is Lumenal. N-linked (GlcNAc...) asparagine glycosylation occurs at Asn78. Phosphoserine occurs at positions 80 and 82. Residue Asn93 is glycosylated (N-linked (GlcNAc...) asparagine). Positions 175, 177, 289, and 569 each coordinate Zn(2+). The active-site Nucleophile is the Asp289. Residue Asn1125 is glycosylated (N-linked (GlcNAc...) asparagine).

Belongs to the glycosyl hydrolase 38 family. As to quaternary structure, homodimer; disulfide-linked. Zn(2+) is required as a cofactor. Glycosylated.

It is found in the golgi apparatus membrane. It carries out the reaction N(4)-{beta-D-GlcNAc-(1-&gt;2)-alpha-D-Man-(1-&gt;3)-[alpha-D-Man-(1-&gt;3)-[alpha-D-Man-(1-&gt;6)]-alpha-D-Man-(1-&gt;6)]-beta-D-Man-(1-&gt;4)-beta-D-GlcNAc-(1-&gt;4)-beta-D-GlcNAc}-L-asparaginyl-[protein] + 2 H2O = 2 alpha-D-mannopyranose + an N(4)-{beta-D-GlcNAc-(1-&gt;2)-alpha-D-Man-(1-&gt;3)-[alpha-D-Man-(1-&gt;6)]-beta-D-Man-(1-&gt;4)-beta-D-GlcNAc-(1-&gt;4)-beta-D-GlcNAc}-L-asparaginyl-[protein]. Its pathway is protein modification; protein glycosylation. Catalyzes the first committed step in the biosynthesis of complex N-glycans. It controls conversion of high mannose to complex N-glycans; the final hydrolytic step in the N-glycan maturation pathway. The protein is Alpha-mannosidase 2 (MAN2A1) of Homo sapiens (Human).